An 85-amino-acid polypeptide reads, in one-letter code: ATP synthase subunit c (85 aa).

Helical transmembrane passes span 20–40 (LGAGIAVFALAGVGMGLGNIF) and 65–85 (FALTEAVALFALLIAFLILFA).

Belongs to the ATPase C chain family. In terms of assembly, F-type ATPases have 2 components, F(1) - the catalytic core - and F(0) - the membrane proton channel. F(1) has five subunits: alpha(3), beta(3), gamma(1), delta(1), epsilon(1). F(0) has three main subunits: a(1), b(2) and c(10-14). The alpha and beta chains form an alternating ring which encloses part of the gamma chain. F(1) is attached to F(0) by a central stalk formed by the gamma and epsilon chains, while a peripheral stalk is formed by the delta and b chains.

The protein resides in the cell inner membrane. F(1)F(0) ATP synthase produces ATP from ADP in the presence of a proton or sodium gradient. F-type ATPases consist of two structural domains, F(1) containing the extramembraneous catalytic core and F(0) containing the membrane proton channel, linked together by a central stalk and a peripheral stalk. During catalysis, ATP synthesis in the catalytic domain of F(1) is coupled via a rotary mechanism of the central stalk subunits to proton translocation. Functionally, key component of the F(0) channel; it plays a direct role in translocation across the membrane. A homomeric c-ring of between 10-14 subunits forms the central stalk rotor element with the F(1) delta and epsilon subunits. The sequence is that of ATP synthase subunit c from Gluconobacter oxydans (strain 621H) (Gluconobacter suboxydans).